Reading from the N-terminus, the 525-residue chain is MVFLFPTGTIIIWVLTILLAVIPWYLLNKFWLKPKRFEKLLKAQGLQGDPYKLSALFMNNSKQDYILKLQQEAESKSIGLSKQAAPSIFSSHHQTVHKYGKNSFLWEGTTPSVIITDPDQIKEVFDRIYDFPKQKLRSIAKYFSFGIIKYEGEKWAKHRKIVNPAFHLDKLKGMLPAFSHSCNEMISKWKGLLSADGTCEVDVWPFLQNLTCDVISRTAFGSSYAEGEKIFQLLKKQAFLLVTTLDKNIPLSLWWLLETTTKKRMKEIERDIRESLEGIIEKREKALKNGETTNDDLLGILLQSNHAENQGHGNSKSIGMTTQEMIDECKLFYLVGQETTSTLLVWTMVLLGRYPEWQARARQEVLQVFGNQNQNFEGLSQLKIVTMILYEVLRLYPPAIYFNRALQKDLKLGNLSLPAGTLVSLPIILIHQDNDIWGDDAKEFKPERFAEGIAKATKGQVSYFPFGWGPRICIGQNFALLEAKIAITSLLQNFSFELSPNYVHVPTTVPFFQPKYGASIILHKL.

Residues 2–22 (VFLFPTGTIIIWVLTILLAVI) traverse the membrane as a helical segment. Position 473 (C473) interacts with heme.

Belongs to the cytochrome P450 family. Mainly expressed in leaves and seed pods and, to a lower extent, in flowers and stems.

Its subcellular location is the membrane. It participates in steroid metabolism; cholesterol metabolism. In terms of biological role, involved in the biosynthesis of spiroketal steroid and saponin natural products from cholesterol such as diosgenin and analogs (e.g. furostanol and spirostanol), plant defense compounds used as main precursors for the industrial production of steroid hormones. During the 5,6-spiroketalization of cholesterol, may catalyze the 27-monohydroxylation of furostanol-type steroid to an intermediate product that undergoes a stereospecific formation of the terminal heterocycle to yield diosgenin. This Trigonella foenum-graecum (Fenugreek) protein is Cytochrome P450 CYP72A613.